The sequence spans 216 residues: CDP-diacylglycerol--glycerol-3-phosphate 3-phosphatidyltransferase (216 aa).

The next 4 helical transmembrane spans lie at 40–60, 88–108, 141–161, and 176–196; these read VVSI…FLDG, VMLC…CILY, MGAV…LAGA, and VVPV…FFPI.

This sequence belongs to the CDP-alcohol phosphatidyltransferase class-I family.

It is found in the cell membrane. It carries out the reaction a CDP-1,2-diacyl-sn-glycerol + sn-glycerol 3-phosphate = a 1,2-diacyl-sn-glycero-3-phospho-(1'-sn-glycero-3'-phosphate) + CMP + H(+). It functions in the pathway phospholipid metabolism; phosphatidylglycerol biosynthesis; phosphatidylglycerol from CDP-diacylglycerol: step 1/2. In terms of biological role, this protein catalyzes the committed step to the synthesis of the acidic phospholipids. This chain is CDP-diacylglycerol--glycerol-3-phosphate 3-phosphatidyltransferase (pgsA), found in Treponema pallidum (strain Nichols).